The sequence spans 653 residues: Chaperone protein dnaK3 (653 aa).

Thr-197 carries the post-translational modification Phosphothreonine; by autocatalysis.

This sequence belongs to the heat shock protein 70 family.

Functionally, acts as a chaperone. In Nostoc sp. (strain PCC 7120 / SAG 25.82 / UTEX 2576), this protein is Chaperone protein dnaK3 (dnaK3).